The sequence spans 461 residues: Photosystem II CP43 reaction center protein (461 aa).

The propeptide occupies methionine 1–glutamate 2. Threonine 3 is modified (N-acetylthreonine). Phosphothreonine is present on threonine 3. A run of 5 helical transmembrane segments spans residues leucine 57–alanine 81, leucine 122–asparagine 143, lysine 166–threonine 188, glutamine 243–serine 263, and tryptophan 279–serine 300. [CaMn4O5] cluster is bound at residue glutamate 355. Residues arginine 435–proline 459 traverse the membrane as a helical segment.

Belongs to the PsbB/PsbC family. PsbC subfamily. In terms of assembly, PSII is composed of 1 copy each of membrane proteins PsbA, PsbB, PsbC, PsbD, PsbE, PsbF, PsbH, PsbI, PsbJ, PsbK, PsbL, PsbM, PsbT, PsbX, PsbY, PsbZ, Psb30/Ycf12, at least 3 peripheral proteins of the oxygen-evolving complex and a large number of cofactors. It forms dimeric complexes. Binds multiple chlorophylls and provides some of the ligands for the Ca-4Mn-5O cluster of the oxygen-evolving complex. It may also provide a ligand for a Cl- that is required for oxygen evolution. PSII binds additional chlorophylls, carotenoids and specific lipids. is required as a cofactor.

Its subcellular location is the plastid. It is found in the chloroplast thylakoid membrane. Functionally, one of the components of the core complex of photosystem II (PSII). It binds chlorophyll and helps catalyze the primary light-induced photochemical processes of PSII. PSII is a light-driven water:plastoquinone oxidoreductase, using light energy to abstract electrons from H(2)O, generating O(2) and a proton gradient subsequently used for ATP formation. The chain is Photosystem II CP43 reaction center protein from Stigeoclonium helveticum (Green alga).